We begin with the raw amino-acid sequence, 92 residues long: Putative regulatory protein Tpet_0986 (92 aa).

Belongs to the RemA family.

This chain is Putative regulatory protein Tpet_0986, found in Thermotoga petrophila (strain ATCC BAA-488 / DSM 13995 / JCM 10881 / RKU-1).